A 1758-amino-acid chain; its full sequence is RanBP2-like and GRIP domain-containing protein 4 (1758 aa).

Ser-21 is modified (phosphoserine). TPR repeat units lie at residues 60-93 (PRAHRFLGLLYELEENTEKAVECYRRSVELNPTQ) and 584-617 (QKMGSGLNSFYDQREYIGRSVHYWKKVLPLLKII). Positions 761-805 (DPLYKNGSLRNADSEIKHSTPSPTKYSLSPSKSYKYSPKTPPRWA) are disordered. Residues 779–798 (STPSPTKYSLSPSKSYKYSP) show a composition bias toward low complexity. The RanBD1 1 domain occupies 1037 to 1173 (HFEPVVQMPE…FEECQQLLLD (137 aa)). Disordered stretches follow at residues 1213–1249 (QTKVTEEENKGSGTGAAGASDTTIKPNPENTGPTLEW) and 1295–1332 (SFKSALSPSKSPAKLNQSGTSVGTDEESDVTQEEERDG). Residues 1236 to 1245 (IKPNPENTGP) are compositionally biased toward polar residues. Residues 1295 to 1309 (SFKSALSPSKSPAKL) show a composition bias toward low complexity. The span at 1318–1330 (TDEESDVTQEEER) shows a compositional bias: acidic residues. One can recognise a RanBD1 2 domain in the interval 1334 to 1470 (YFEPVVPLPD…FDEAKTAQEK (137 aa)). Polar residues predominate over residues 1583 to 1594 (SETSSVAQSGSE). Residues 1583-1621 (SETSSVAQSGSESKVEPKKCELSKNSDIEQSSDSKVKNL) form a disordered region. Over residues 1595 to 1618 (SKVEPKKCELSKNSDIEQSSDSKV) the composition is skewed to basic and acidic residues. Residues 1703 to 1753 (QEESAANVEHLKNVLLQFIFLKPGSERERLLPVINTMLQLSPEEKGKLAAV) form the GRIP domain.

In Homo sapiens (Human), this protein is RanBP2-like and GRIP domain-containing protein 4 (RGPD4).